A 636-amino-acid chain; its full sequence is Eukaryotic peptide chain release factor GTP-binding subunit ERF3A (636 aa).

2 stretches are compositionally biased toward gly residues: residues 1–16 (MDPS…GGGS) and 103–116 (AAGG…GAGG). Disordered regions lie at residues 1–54 (MDPS…AAVA) and 90–206 (LRGP…PPGA). A compositionally biased stretch (polar residues) spans 121–138 (VESSQDQSCEGSNSTVSM). Acidic residues predominate over residues 183–193 (STQEMMEEEEE). The tr-type G domain maps to 209–435 (KEHVNVVFIG…DNLPNFNRSV (227 aa)). The tract at residues 218-225 (GHVDAGKS) is G1. 221–226 (DAGKST) serves as a coordination point for GTP. A G2 region spans residues 274 to 278 (GKTVE). Residues 295 to 298 (DAPG) form a G3 region. GTP-binding positions include 357–360 (NKMD) and 399–401 (SGL). Residues 357-360 (NKMD) are G4. The interval 399–401 (SGL) is G5.

Belongs to the TRAFAC class translation factor GTPase superfamily. Classic translation factor GTPase family. ERF3 subfamily. Component of the eRF1-eRF3-GTP ternary complex, composed of ETF1/ERF1 and ERF3 (GSPT1/ERF3A or GSPT2/ERF3B) and GTP. Component of the transient SURF (SMG1-UPF1-eRF1-eRF3) complex. The ETF1-GSPT1 complex interacts with JMJD4. Interacts with PABPC1. Interacts with SHFL.

It catalyses the reaction GTP + H2O = GDP + phosphate + H(+). Its function is as follows. GTPase component of the eRF1-eRF3-GTP ternary complex, a ternary complex that mediates translation termination in response to the termination codons UAA, UAG and UGA. GSPT1/ERF3A mediates ETF1/ERF1 delivery to stop codons: The eRF1-eRF3-GTP complex binds to a stop codon in the ribosomal A-site. GTP hydrolysis by GSPT1/ERF3A induces a conformational change that leads to its dissociation, permitting ETF1/ERF1 to accommodate fully in the A-site. Component of the transient SURF complex which recruits UPF1 to stalled ribosomes in the context of nonsense-mediated decay (NMD) of mRNAs containing premature stop codons. Required for SHFL-mediated translation termination which inhibits programmed ribosomal frameshifting (-1PRF) of mRNA from viruses and cellular genes. This Mus musculus (Mouse) protein is Eukaryotic peptide chain release factor GTP-binding subunit ERF3A (Gspt1).